The sequence spans 606 residues: Limonene synthase, chloroplastic (606 aa).

The transit peptide at 1 to 38 (MAIINLPVPTNSSSEVNKHNHLRSCLPSGRATFTTLSA) directs the protein to the chloroplast. Residues R320, D357, D361, R497, and D500 each contribute to the (2E)-geranyl diphosphate site. Residues D357 and D361 each coordinate Mg(2+). A DDXXD motif motif is present at residues 357-361 (DDIYD). Mg(2+)-binding residues include D500, T504, and E508.

The protein belongs to the terpene synthase family. Tpsb subfamily. In terms of assembly, monomer. It depends on Mg(2+) as a cofactor. Mn(2+) is required as a cofactor. In terms of tissue distribution, confined to fruits.

It is found in the plastid. The protein resides in the chloroplast. The enzyme catalyses (2E,6E)-farnesyl diphosphate = (E)-beta-farnesene + diphosphate. It catalyses the reaction (2E)-geranyl diphosphate = limonene + diphosphate. It carries out the reaction (2E)-geranyl diphosphate = beta-pinene + diphosphate. The catalysed reaction is (2E)-geranyl diphosphate = sabinene + diphosphate. The enzyme catalyses (2E)-geranyl diphosphate = beta-myrcene + diphosphate. It catalyses the reaction (2E)-geranyl diphosphate = alpha-pinene + diphosphate. It carries out the reaction (2E)-geranyl diphosphate = terpinolene + diphosphate. It participates in secondary metabolite biosynthesis; terpenoid biosynthesis. Monoterpene synthase (mono-TPS) involved in the biosynthesis of monoterpenes natural products, constituent of coffee beverage aroma. Catalyzes the conversion of (2E)-geranyl diphosphate (GPP) into limonene, beta-pinene, sabinene and beta-myrcene, and, as minor products, alpha-pinene and alpha-terpinolene. Can also, with a low efficiency, use farnesyl pyrophosphate (FPP) as substrate to produce beta-farnesene. Not able to use geranylgeranyl pyrophosphate (GGPP) as substrate. The sequence is that of Limonene synthase, chloroplastic from Coffea arabica (Arabian coffee).